A 375-amino-acid chain; its full sequence is Stimulator of interferon genes protein 2 (375 aa).

4 helical membrane-spanning segments follow: residues T30–V50, I60–V80, A114–E134, and Y144–L164. 3 residues coordinate 2',3'-cGAMP: Y195, R256, and R262.

This sequence belongs to the STING family.

The protein localises to the membrane. In terms of biological role, facilitator of innate immune signaling that acts as a sensor of second messenger signals produced by cyclic GMP-AMP synthase-like receptors (cGLRs) and promotes the production of type I interferon. Innate immune response is triggered in response to nucleotides from viruses and bacteria delivered to the cytoplasm. Acts by binding cyclic dinucleotides: recognizes and binds 2'-3' linked cGAMP (2'-3'-cGAMP), a second messengers produced by cGLRs in response to nucleotides in the cytosol, such as double-stranded RNA (dsRNA). Upon binding to 2'-3'-cGAMP, oligomerizes and promotes the recruitment and subsequent activation of the transcription factor IRF3 to induce expression of type I interferon. This is Stimulator of interferon genes protein 2 from Stylophora pistillata (Smooth cauliflower coral).